A 162-amino-acid chain; its full sequence is Onchocystatin (162 aa).

Positions methionine 1–alanine 32 are cleaved as a signal peptide. The segment at alanine 30–glycine 54 is disordered. Residues serine 36–aspartate 47 are compositionally biased toward basic and acidic residues. The short motif at glutamine 97–glycine 101 is the Secondary area of contact element. Cysteine 115 and cysteine 128 are joined by a disulfide.

The protein belongs to the cystatin family. In terms of tissue distribution, expressed in the cuticle of L3 and L4 larvae, female adult, and in the eggshell of developing microfilariae.

Cysteine protease inhibitor which inhibits members of the peptidase C1 family. In the human host, inhibits CTSL/cathepsin L and CTSS/cathepsin S and to a lesser extent CTSB/cathepsin B which may cause defects in antigen processing and thereby impair antigen-driven T cell proliferation. The sequence is that of Onchocystatin from Onchocerca volvulus.